The primary structure comprises 286 residues: ATP synthase gamma chain (286 aa).

It belongs to the ATPase gamma chain family. F-type ATPases have 2 components, CF(1) - the catalytic core - and CF(0) - the membrane proton channel. CF(1) has five subunits: alpha(3), beta(3), gamma(1), delta(1), epsilon(1). CF(0) has three main subunits: a, b and c.

Its subcellular location is the cell inner membrane. In terms of biological role, produces ATP from ADP in the presence of a proton gradient across the membrane. The gamma chain is believed to be important in regulating ATPase activity and the flow of protons through the CF(0) complex. This Shewanella pealeana (strain ATCC 700345 / ANG-SQ1) protein is ATP synthase gamma chain.